The following is a 189-amino-acid chain: Glycerol-3-phosphate acyltransferase (189 aa).

Helical transmembrane passes span 1–21 (MFWL…AIVL), 50–70 (KLAI…VLLA), 77–97 (LHAQ…PLYF), 111–131 (MLMG…LLTF), and 151–171 (LLAW…VMIV).

Belongs to the PlsY family. In terms of assembly, probably interacts with PlsX.

It is found in the cell inner membrane. The catalysed reaction is an acyl phosphate + sn-glycerol 3-phosphate = a 1-acyl-sn-glycero-3-phosphate + phosphate. Its pathway is lipid metabolism; phospholipid metabolism. Catalyzes the transfer of an acyl group from acyl-phosphate (acyl-PO(4)) to glycerol-3-phosphate (G3P) to form lysophosphatidic acid (LPA). This enzyme utilizes acyl-phosphate as fatty acyl donor, but not acyl-CoA or acyl-ACP. The protein is Glycerol-3-phosphate acyltransferase of Pseudomonas putida (strain ATCC 700007 / DSM 6899 / JCM 31910 / BCRC 17059 / LMG 24140 / F1).